The chain runs to 1394 residues: MVFGELMSSAGDSGPGYVLNDFDAVPRLSYARSIDIRDSLSDLIRIQRDSYDAFIGIDEGSSGGIQSIFQSMFPIRDPLGRAVLEFVSCNIGEPQYDEYECIKRGITFSVPMRITLRFVVWKVQEVSFKEVKYVVDEGTLERSVKYMKEQEVSIGDLPMMTSYGTFIINGIERVIVSQMHRSPGVFFDSDKGKTYSSGKLIYSARIIPYRGSWLDFEFDIKDIIYFRIDKKRKLPVTYLLKALGMSNNDILDTFYDKVLYVRSDKGWKVPFVVDRFKGVRLSYDLMDVDGNVLIKANTRITLRIAKKLYADGLREYLVPFAGISGLFVATDLVDPASGAVIVSAGEAIAAEHIVKLELFDISEIAFLNIDFLTVGPYVLNTLFLDRHITQEDALFEIYRVLRSGESPNLEAVKSFFKGLFFEPDRYDLSVVGRIKLNSHLRLDIDENLTVLTKDDIVHVIKKLVLLRDGEGVVDDIDHLGNRRVRSVGEFIENQFRVGILRLERMIMDYMSSVNFDNAVPCDFVNPKILATVLKDFFSSSQLSQFMDQTNPLSEVTHKRRLSALGPGGLTRERAGFEVRDVHPTHYGRICPIETPEGQNIGLISSLAIYAKINKYGFIESPYRKVIDGVVTDSVEYLLATQESDYYIADAGAALDENNRFVDDMLYCRHGGNFVMVKREDVNYIDVSPKQIVSVAASLIPFLENNDANRALMGSNMQRQAVPLLKAEAPLVGTGMESVVAAGSGAVVLAKRDGVLHRVDRVLYPVIRAFDKNKDSILVLIYTTEKVQRSNHNTCINQRPIVKIGDYVRTNDVIADGAAIDRGELALGKNVLVAFMSWQGCNFEDSIVISSDVVKRDVFTSIHIEEFECVVRDTPLGPEKIMRSVPDVNEESLSHLDDVGIVNIGAEVSAGSVLVGKVTPRPPVSLPPETKLLVTIFGEKVFDCVDSSLYLPPDVEGTVIDVHVFVRRGVEENDRSLLIKQSEVNSFRKERDYEIDVVSEYFYDELKKLLCSADLPLNGHADVESLLAAKSLEALWEIGLSNPKISAKVADMKGKFDELITEAHSKFDQKIDKLNYGYDLPQGVLTIVKVFVAVKHNLQPGDKMAGRHGNKGVISRIVPVEDMPHLEDGTPVDIILNSLGVPSRMNIGQILETHLGWAAVNLGHRVGRMLDSGEEEGPVVERIRSFLSEVYEGQKLKEDVASMSDEALLKFANRLRRGVPMAAPVFEGPKDAQISRLLELADVDPSGQVDLYDGRSGQKFDRKVTVGYIYMLKLHHLVDDKIHARSVGPYGLVTQQPLGGKSHFGGQRFGEMECWALQAYGAAYTLQEMLTVKSDDTSPGRRPRVPYSESYYIKGDSNFECGIPESFNVMVKELRSLCLDVVLKHDKEFTSSNVE.

Belongs to the RNA polymerase beta chain family. As to quaternary structure, the RNAP catalytic core consists of 2 alpha, 1 beta, 1 beta' and 1 omega subunit. When a sigma factor is associated with the core the holoenzyme is formed, which can initiate transcription.

The catalysed reaction is RNA(n) + a ribonucleoside 5'-triphosphate = RNA(n+1) + diphosphate. Functionally, DNA-dependent RNA polymerase catalyzes the transcription of DNA into RNA using the four ribonucleoside triphosphates as substrates. In Anaplasma phagocytophilum (Ehrlichia phagocytophila), this protein is DNA-directed RNA polymerase subunit beta.